A 59-amino-acid polypeptide reads, in one-letter code: LICYNQLGTKPPTTETCGDDSCYKMIWTYDGVIRRGCGCFTPRGDMPRPRCCKSDKCNL.

Disulfide bonds link cysteine 3–cysteine 22, cysteine 17–cysteine 37, cysteine 39–cysteine 51, and cysteine 52–cysteine 57. Residues 43–45 carry the Cell attachment site motif; the sequence is RGD.

This sequence belongs to the three-finger toxin family. Short-chain subfamily. Antiplatelet toxin sub-subfamily. In terms of tissue distribution, expressed by the venom gland.

Its subcellular location is the secreted. In terms of biological role, inhibits ADP-induced platelet aggregation and inhibits the binding of purified platelet fibrinogen receptor alpha-IIb/beta-3 (ITGA2B/ITGB3) to immobilized fibrinogen. This is Thrombostatin from Dendroaspis angusticeps (Eastern green mamba).